An 89-amino-acid chain; its full sequence is MSKKCALTGRKPRRGYSYAIRGISKKKKGIGLKVTGRTKRRFFPNIMTKRLWSTEENRFLKLKISAAALRLVDKLGLDQVVARAKSKGF.

The protein belongs to the bacterial ribosomal protein bL28 family.

The polypeptide is Large ribosomal subunit protein bL28 (Chlamydia trachomatis serovar A (strain ATCC VR-571B / DSM 19440 / HAR-13)).